The sequence spans 212 residues: F-box protein GID2 (212 aa).

The tract at residues 1–74 (MKFRSDSSGG…AGEGEQPRVP (74 aa)) is disordered. Positions 35–59 (DPSSSSSQGEASSSSQPPPQQQQEE) are enriched in low complexity. Residues 70 to 116 (QPRVPDLGEDLVFEVLRRAEARTLAAAACVSRGWRQLAEDERLWEAA) enclose the F-box domain.

As to quaternary structure, part of some SCF(GID2) complex, which consist of a SKP1 protein, CUL1, GID2 and some RING box protein. Interacts directly with SKP2 and SKP15. Interacts directly with DELLA protein SLR1. May have a higher affinity for phosphorylated SLR1 proteins. As to expression, widely expressed. Preferentially expressed in unopened flowers, shoot apices and elongation stem. Expressed at lower level in the leaf blades, leaf sheaths, roots and rachis.

Its subcellular location is the nucleus. Its pathway is protein modification; protein ubiquitination. In terms of biological role, essential component of some SCF-type E3 ligase complex that positively regulates the gibberellin signaling pathway. Upon gibberellin treatment, the complex mediates the ubiquitination and subsequent degradation of DELLA protein SLR1, a repressor of the gibberellin pathway, leading to activate the pathway. The polypeptide is F-box protein GID2 (GID2) (Oryza sativa subsp. japonica (Rice)).